Reading from the N-terminus, the 202-residue chain is FMN-dependent NADH:quinone oxidoreductase (202 aa).

FMN-binding positions include Ser-10 and 95-98 (MYNF).

Belongs to the azoreductase type 1 family. Homodimer. Requires FMN as cofactor.

The enzyme catalyses 2 a quinone + NADH + H(+) = 2 a 1,4-benzosemiquinone + NAD(+). It carries out the reaction N,N-dimethyl-1,4-phenylenediamine + anthranilate + 2 NAD(+) = 2-(4-dimethylaminophenyl)diazenylbenzoate + 2 NADH + 2 H(+). Its function is as follows. Quinone reductase that provides resistance to thiol-specific stress caused by electrophilic quinones. Also exhibits azoreductase activity. Catalyzes the reductive cleavage of the azo bond in aromatic azo compounds to the corresponding amines. In Pseudoalteromonas atlantica (strain T6c / ATCC BAA-1087), this protein is FMN-dependent NADH:quinone oxidoreductase.